We begin with the raw amino-acid sequence, 95 residues long: Probable FAD-linked sulfhydryl oxidase OPG072 (95 aa).

The Intravirion portion of the chain corresponds to 1 to 8 (MNPKHWGR). Residues 1-95 (MNPKHWGRAA…AIDVSKVKPL (95 aa)) form the ERV/ALR sulfhydryl oxidase domain. Residues 9–25 (AAWTIIFIVLSQAGLDG) traverse the membrane as a helical segment. The Virion surface portion of the chain corresponds to 26–95 (NIEACKRKLY…AIDVSKVKPL (70 aa)). Residues Cys-43 and Cys-46 are joined by a disulfide bond.

This sequence belongs to the orthopoxvirus OPG072 family. In terms of assembly, interacts with OPG128; this interaction involves formation of a transient disulfide-bonded intermediate, allowing disulfide bond transfer. FAD is required as a cofactor.

It is found in the virion membrane. It localises to the host cytoplasm. It carries out the reaction 2 R'C(R)SH + O2 = R'C(R)S-S(R)CR' + H2O2. Functionally, FAD-dependent sulfhydryl oxidase that catalyzes disulfide bond formation. The complete pathway for formation of disulfide bonds in intracellular virion membrane proteins sequentially involves thiol-disulfide transfer between OPG072, OPG128 and OPG088. In Variola virus (isolate Human/India/Ind3/1967) (VARV), this protein is Probable FAD-linked sulfhydryl oxidase OPG072 (OPG072).